Here is a 441-residue protein sequence, read N- to C-terminus: Membrane protein PB1A10.07c (441 aa).

11 consecutive transmembrane segments (helical) span residues 1 to 21, 41 to 61, 97 to 117, 128 to 148, 158 to 178, 206 to 226, 235 to 255, 263 to 283, 307 to 327, 364 to 384, and 415 to 435; these read MGAV…VVGI, VGAV…SWCM, LSFT…LCNT, GLWP…FFIP, IISV…LVDF, TVGM…FFCA, INTI…HPTI, GLAQ…SALA, VIGA…AASS, YNFI…ASLL, and IITS…PVFF.

Belongs to the TDE1 family.

It is found in the membrane. The chain is Membrane protein PB1A10.07c from Schizosaccharomyces pombe (strain 972 / ATCC 24843) (Fission yeast).